Reading from the N-terminus, the 324-residue chain is Viral cathepsin (324 aa).

An N-terminal signal peptide occupies residues 1–16 (MNKIVLYLLVYGAVQC). Residues 17–113 (AAYDVLKAPN…VVLDRPPDKG (97 aa)) constitute a propeptide, activation peptide. 3 cysteine pairs are disulfide-bonded: Cys134–Cys175, Cys168–Cys208, and Cys263–Cys311. Residue Cys137 is part of the active site. Asn159 carries an N-linked (GlcNAc...) asparagine; by host glycan. Catalysis depends on residues His270 and Asn290.

Belongs to the peptidase C1 family. In terms of processing, synthesized as an inactive proenzyme and activated by proteolytic removal of the inhibitory propeptide.

It carries out the reaction Endopeptidase of broad specificity, hydrolyzing substrates of both cathepsin L and cathepsin B.. Its function is as follows. Cysteine protease that plays an essential role in host liquefaction to facilitate horizontal transmission of the virus. May participate in the degradation of foreign protein expressed by the baculovirus system. The protein is Viral cathepsin (Vcath) of Choristoneura fumiferana nuclear polyhedrosis virus (CfMNPV).